The following is a 563-amino-acid chain: Arginine--tRNA ligase (563 aa).

A 'HIGH' region motif is present at residues 121 to 131; the sequence is PNIAKPMSMGH.

The protein belongs to the class-I aminoacyl-tRNA synthetase family. As to quaternary structure, monomer.

It localises to the cytoplasm. The catalysed reaction is tRNA(Arg) + L-arginine + ATP = L-arginyl-tRNA(Arg) + AMP + diphosphate. The sequence is that of Arginine--tRNA ligase from Leuconostoc citreum (strain KM20).